Here is a 143-residue protein sequence, read N- to C-terminus: Transcriptional regulator MraZ (143 aa).

2 consecutive SpoVT-AbrB domains span residues 5–47 (TFTP…PRNV) and 76–119 (ADEQ…NAES).

The protein belongs to the MraZ family. In terms of assembly, forms oligomers.

The protein resides in the cytoplasm. Its subcellular location is the nucleoid. The protein is Transcriptional regulator MraZ of Corynebacterium kroppenstedtii (strain DSM 44385 / JCM 11950 / CIP 105744 / CCUG 35717).